Here is a 264-residue protein sequence, read N- to C-terminus: Protein OXIDATIVE STRESS 3 LIKE 1 (264 aa).

2 disordered regions span residues 1-76 (MDCV…GPLE) and 178-225 (TGEG…QGSF). Residues 29 to 43 (PSDSSSSPSSSASSS) show a composition bias toward low complexity. Residues 47-56 (NSDDGEKSSE) show a composition bias toward basic and acidic residues. Residues 57–67 (DGGDDAGENEV) show a composition bias toward acidic residues. The span at 179–201 (GEGSSSGGDSSPGSSPTTSGSPP) shows a compositional bias: low complexity. Basic residues predominate over residues 203–212 (QLHHHQHQMK).

The protein localises to the nucleus. Functionally, promotes slightly the tolerance to zinc (Zn) and to oxidizing chemicals (e.g. diamide). The protein is Protein OXIDATIVE STRESS 3 LIKE 1 of Arabidopsis thaliana (Mouse-ear cress).